Here is a 201-residue protein sequence, read N- to C-terminus: Molybdenum cofactor guanylyltransferase (201 aa).

GTP contacts are provided by residues 15 to 17 (LAG), Lys-28, Asp-74, and Asp-104. Asp-104 contacts Mg(2+).

The protein belongs to the MobA family. In terms of assembly, monomer. Mg(2+) is required as a cofactor.

It localises to the cytoplasm. The catalysed reaction is Mo-molybdopterin + GTP + H(+) = Mo-molybdopterin guanine dinucleotide + diphosphate. Transfers a GMP moiety from GTP to Mo-molybdopterin (Mo-MPT) cofactor (Moco or molybdenum cofactor) to form Mo-molybdopterin guanine dinucleotide (Mo-MGD) cofactor. The protein is Molybdenum cofactor guanylyltransferase of Pseudomonas syringae pv. tomato (strain ATCC BAA-871 / DC3000).